Consider the following 337-residue polypeptide: BRI1 kinase inhibitor 1 (337 aa).

Over residues 1–25 (METNLQQVKNSSQTFSEKQNPKQEA) the composition is skewed to polar residues. Disordered stretches follow at residues 1 to 38 (METN…SSPS) and 51 to 72 (SSSS…SSYQ). Low complexity predominate over residues 26–38 (SPSPISSTCSSPS). Tyr211 carries the post-translational modification Phosphotyrosine. Residues 270 to 310 (SAPASMRTSPTNSGHLRVSTAGLSSSSGSTSSSSSDSTMEE) form a disordered region. Residues 288-310 (STAGLSSSSGSTSSSSSDSTMEE) are compositionally biased toward low complexity.

In terms of assembly, interacts (via C-terminus) with BRI1 (via kinase domain). Phosphorylated on Tyr-211 in response to brassinosteroid perception, leading to its inactivation: once phosphorylated, displaced into the cytosol where it is inactive. As to expression, expressed in leaves, petioles, shoot apices, hypocotyls, roots and flowers.

The protein resides in the cell membrane. Its subcellular location is the cytoplasm. In terms of biological role, negative regulator of brassinosteroid signaling. When associated to the membrane, limits the interaction of BRI1 with BAK1 by binding to the kinase-inactive form of BRI1. The chain is BRI1 kinase inhibitor 1 (BKI1) from Arabidopsis thaliana (Mouse-ear cress).